Consider the following 381-residue polypeptide: tRNA pseudouridine synthase D (381 aa).

Catalysis depends on Asp81, which acts as the Nucleophile. Residues 160–335 enclose the TRUD domain; that stretch reads GMPNYFGSQR…TLGSRRFFWV (176 aa).

It belongs to the pseudouridine synthase TruD family.

The enzyme catalyses uridine(13) in tRNA = pseudouridine(13) in tRNA. Responsible for synthesis of pseudouridine from uracil-13 in transfer RNAs. In Helicobacter pylori (strain P12), this protein is tRNA pseudouridine synthase D.